The sequence spans 160 residues: MRIGLFAVGRLKTGPEKDLAARYLDRFAKAGPAIGLELARMTEVAESRASNGETRKREEAVLLQKAHPDGGILILLDERGKALDSEAFAALLGTFRDQGKRDLTIAIGGADGLDPSLYDRADATICLGKMTWPHQLVRILIAEQLYRAVTILSGHPYHRV.

Residues Leu-76, Gly-108, and 127–132 (LGKMTW) each bind S-adenosyl-L-methionine.

It belongs to the RNA methyltransferase RlmH family. In terms of assembly, homodimer.

Its subcellular location is the cytoplasm. The catalysed reaction is pseudouridine(1915) in 23S rRNA + S-adenosyl-L-methionine = N(3)-methylpseudouridine(1915) in 23S rRNA + S-adenosyl-L-homocysteine + H(+). Specifically methylates the pseudouridine at position 1915 (m3Psi1915) in 23S rRNA. The protein is Ribosomal RNA large subunit methyltransferase H of Rhizobium rhizogenes (strain K84 / ATCC BAA-868) (Agrobacterium radiobacter).